A 164-amino-acid polypeptide reads, in one-letter code: Ribonuclease P protein component 2 (164 aa).

Belongs to the eukaryotic/archaeal RNase P protein component 2 family. In terms of assembly, consists of a catalytic RNA component and at least 4-5 protein subunits.

It localises to the cytoplasm. It catalyses the reaction Endonucleolytic cleavage of RNA, removing 5'-extranucleotides from tRNA precursor.. Part of ribonuclease P, a protein complex that generates mature tRNA molecules by cleaving their 5'-ends. This is Ribonuclease P protein component 2 from Halobacterium salinarum (strain ATCC 29341 / DSM 671 / R1).